The chain runs to 391 residues: Glutamate 5-kinase (391 aa).

Residue Lys-17 participates in ATP binding. Substrate contacts are provided by Ser-57, Asp-144, and Asn-156. Residues 176-177 (SD) and 216-222 (TGGMTTK) each bind ATP. One can recognise a PUA domain in the interval 278 to 356 (QGQIVIDDGA…AWLAAEMGPA (79 aa)). Residues 370–391 (SRRRKAEPSSRNQKSSGSRVTS) form a disordered region. Over residues 378–391 (SSRNQKSSGSRVTS) the composition is skewed to polar residues.

This sequence belongs to the glutamate 5-kinase family.

The protein resides in the cytoplasm. It catalyses the reaction L-glutamate + ATP = L-glutamyl 5-phosphate + ADP. It functions in the pathway amino-acid biosynthesis; L-proline biosynthesis; L-glutamate 5-semialdehyde from L-glutamate: step 1/2. In terms of biological role, catalyzes the transfer of a phosphate group to glutamate to form L-glutamate 5-phosphate. The chain is Glutamate 5-kinase from Cutibacterium acnes (strain DSM 16379 / KPA171202) (Propionibacterium acnes).